Consider the following 564-residue polypeptide: Dihydroxy-acid dehydratase (564 aa).

Asp80 serves as a coordination point for Mg(2+). Cys121 lines the [2Fe-2S] cluster pocket. The Mg(2+) site is built by Asp122 and Lys123. At Lys123 the chain carries N6-carboxylysine. Cys194 provides a ligand contact to [2Fe-2S] cluster. Glu447 contacts Mg(2+). The Proton acceptor role is filled by Ser473.

It belongs to the IlvD/Edd family. Homodimer. [2Fe-2S] cluster is required as a cofactor. Mg(2+) serves as cofactor.

It carries out the reaction (2R)-2,3-dihydroxy-3-methylbutanoate = 3-methyl-2-oxobutanoate + H2O. The catalysed reaction is (2R,3R)-2,3-dihydroxy-3-methylpentanoate = (S)-3-methyl-2-oxopentanoate + H2O. Its pathway is amino-acid biosynthesis; L-isoleucine biosynthesis; L-isoleucine from 2-oxobutanoate: step 3/4. It participates in amino-acid biosynthesis; L-valine biosynthesis; L-valine from pyruvate: step 3/4. In terms of biological role, functions in the biosynthesis of branched-chain amino acids. Catalyzes the dehydration of (2R,3R)-2,3-dihydroxy-3-methylpentanoate (2,3-dihydroxy-3-methylvalerate) into 2-oxo-3-methylpentanoate (2-oxo-3-methylvalerate) and of (2R)-2,3-dihydroxy-3-methylbutanoate (2,3-dihydroxyisovalerate) into 2-oxo-3-methylbutanoate (2-oxoisovalerate), the penultimate precursor to L-isoleucine and L-valine, respectively. This Listeria innocua serovar 6a (strain ATCC BAA-680 / CLIP 11262) protein is Dihydroxy-acid dehydratase.